We begin with the raw amino-acid sequence, 162 residues long: Cyclic pyranopterin monophosphate synthase (162 aa).

Substrate is bound by residues 75–77 (LCH) and 113–114 (ME). Residue aspartate 128 is part of the active site.

It belongs to the MoaC family. Homohexamer; trimer of dimers.

The catalysed reaction is (8S)-3',8-cyclo-7,8-dihydroguanosine 5'-triphosphate = cyclic pyranopterin phosphate + diphosphate. The protein operates within cofactor biosynthesis; molybdopterin biosynthesis. Functionally, catalyzes the conversion of (8S)-3',8-cyclo-7,8-dihydroguanosine 5'-triphosphate to cyclic pyranopterin monophosphate (cPMP). This chain is Cyclic pyranopterin monophosphate synthase, found in Xanthobacter autotrophicus (strain ATCC BAA-1158 / Py2).